The sequence spans 200 residues: MASSLTCAGVIWALLSFLCAATSCVGFFMPYWLLGSQMGKPVSFGTFRRCSYPIRDEARGGTVMLEQCGRYASFQGIPSLEWRICTVVTGIGCGLLLLVALTAIMGCCVTDLISRTIGRVAGGIQFVGGLLIGSGCALYPLGWDSEEVRQTCSNSSDQFDLGSCEIGWAYYCTGAGAAAAMVLCTWMACFAGKKQKHYPY.

A signal peptide spans 1-21; that stretch reads MASSLTCAGVIWALLSFLCAA. Transmembrane regions (helical) follow at residues 84-104 and 123-143; these read ICTV…LTAI and GIQF…PLGW. Residue asparagine 154 is glycosylated (N-linked (GlcNAc...) asparagine). Residues 172-192 form a helical membrane-spanning segment; it reads CTGAGAAAAMVLCTWMACFAG.

It belongs to the LHFP family.

The protein localises to the membrane. The sequence is that of LHFPL tetraspan subfamily member 6 protein from Danio rerio (Zebrafish).